We begin with the raw amino-acid sequence, 519 residues long: Galactokinase (519 aa).

4 residues coordinate alpha-D-galactose: Arg-47, Glu-53, His-54, and Asp-56. Gly-159, Gly-161, Ser-163, and Ser-164 together coordinate ATP. Residue Asp-209 coordinates alpha-D-galactose. Asp-209 serves as the catalytic Proton acceptor. Residues Asn-257 and Lys-258 each coordinate ATP. Position 266 (Tyr-266) interacts with alpha-D-galactose.

This sequence belongs to the GHMP kinase family. GalK subfamily.

It carries out the reaction alpha-D-galactose + ATP = alpha-D-galactose 1-phosphate + ADP + H(+). It functions in the pathway carbohydrate metabolism; galactose metabolism. Functionally, galactokinase is a key enzyme in the galactose metabolism where it catalyzes the conversion of alpha-D-galactose to galactose 1-phosphate. Can also induce the transcription of the gal genes in response to the organism being challenged with galactose as the sole source of carbon. The protein is Galactokinase (gal1) of Schizosaccharomyces pombe (strain 972 / ATCC 24843) (Fission yeast).